Reading from the N-terminus, the 274-residue chain is Large ribosomal subunit protein uL2 (274 aa).

The disordered stretch occupies residues 224 to 274; that stretch reads VAMNPVDHPHGGGEGRTSGGRHPVTPWGIPTKGYKTRKNKRSNKLIVQKRK. Residues 257–274 show a composition bias toward basic residues; the sequence is YKTRKNKRSNKLIVQKRK.

The protein belongs to the universal ribosomal protein uL2 family. As to quaternary structure, part of the 50S ribosomal subunit. Forms a bridge to the 30S subunit in the 70S ribosome.

One of the primary rRNA binding proteins. Required for association of the 30S and 50S subunits to form the 70S ribosome, for tRNA binding and peptide bond formation. It has been suggested to have peptidyltransferase activity; this is somewhat controversial. Makes several contacts with the 16S rRNA in the 70S ribosome. The chain is Large ribosomal subunit protein uL2 from Francisella philomiragia subsp. philomiragia (strain ATCC 25017 / CCUG 19701 / FSC 153 / O#319-036).